The primary structure comprises 83 residues: UPF0512 protein W (83 aa).

This sequence belongs to the UPF0512 family.

The polypeptide is UPF0512 protein W (Dictyostelium discoideum (Social amoeba)).